The following is a 327-amino-acid chain: Tetraacyldisaccharide 4'-kinase (327 aa).

52 to 59 (TLGGAGKT) is a binding site for ATP.

Belongs to the LpxK family.

It carries out the reaction a lipid A disaccharide + ATP = a lipid IVA + ADP + H(+). Its pathway is glycolipid biosynthesis; lipid IV(A) biosynthesis; lipid IV(A) from (3R)-3-hydroxytetradecanoyl-[acyl-carrier-protein] and UDP-N-acetyl-alpha-D-glucosamine: step 6/6. Transfers the gamma-phosphate of ATP to the 4'-position of a tetraacyldisaccharide 1-phosphate intermediate (termed DS-1-P) to form tetraacyldisaccharide 1,4'-bis-phosphate (lipid IVA). In Methylorubrum extorquens (strain PA1) (Methylobacterium extorquens), this protein is Tetraacyldisaccharide 4'-kinase.